Here is a 473-residue protein sequence, read N- to C-terminus: Double-stranded RNA-binding protein 7 (473 aa).

Over residues 1–10 (MDMPPTPLPP) the composition is skewed to pro residues. The segment at 1-22 (MDMPPTPLPPETANTSPAPNGA) is disordered. DRBM domains lie at 33-102 (VFKS…EIVK) and 118-185 (LCKN…AIQG). 3 stretches are compositionally biased toward basic and acidic residues: residues 286–307 (KRVEAEPPRDIEMVQPDKENQH), 317–327 (DEARVEQEPSR), and 416–427 (VDARVVKEESPR). Disordered stretches follow at residues 286 to 329 (KRVE…SRDI) and 393 to 473 (QLNE…MSEE). Over residues 433-450 (EATNMKETPKNSAVCNSP) the composition is skewed to polar residues.

Binds double-stranded RNA. This chain is Double-stranded RNA-binding protein 7 (DRB7), found in Oryza sativa subsp. japonica (Rice).